Reading from the N-terminus, the 253-residue chain is Exosome complex component Rrp4 (253 aa).

The 74-residue stretch at 80-153 folds into the S1 motif domain; it reads GDIVIGIVVD…SRGPILTVQD (74 aa).

The protein belongs to the RRP4 family. In terms of assembly, component of the archaeal exosome complex. Forms a trimer of Rrp4 and/or Csl4 subunits. The trimer associates with a hexameric ring-like arrangement composed of 3 Rrp41-Rrp42 heterodimers.

Its subcellular location is the cytoplasm. Non-catalytic component of the exosome, which is a complex involved in RNA degradation. Increases the RNA binding and the efficiency of RNA degradation. Confers strong poly(A) specificity to the exosome. The polypeptide is Exosome complex component Rrp4 (Ignisphaera aggregans (strain DSM 17230 / JCM 13409 / AQ1.S1)).